Here is a 216-residue protein sequence, read N- to C-terminus: Small ribosomal subunit protein uS3c (216 aa).

The region spanning 43-118 is the KH type-2 domain; that stretch reads IKNYIQKNIR…KLNIAIVKVA (76 aa).

This sequence belongs to the universal ribosomal protein uS3 family. Part of the 30S ribosomal subunit.

The protein resides in the plastid. It is found in the chloroplast. In Glycine max (Soybean), this protein is Small ribosomal subunit protein uS3c (rps3).